We begin with the raw amino-acid sequence, 104 residues long: Large ribosomal subunit protein uL24 (104 aa).

This sequence belongs to the universal ribosomal protein uL24 family. Part of the 50S ribosomal subunit.

Its function is as follows. One of two assembly initiator proteins, it binds directly to the 5'-end of the 23S rRNA, where it nucleates assembly of the 50S subunit. Functionally, one of the proteins that surrounds the polypeptide exit tunnel on the outside of the subunit. This chain is Large ribosomal subunit protein uL24, found in Serratia proteamaculans (strain 568).